Here is a 390-residue protein sequence, read N- to C-terminus: Phosphopentomutase (390 aa).

Positions 11, 283, 288, 324, 325, and 336 each coordinate Mn(2+).

This sequence belongs to the phosphopentomutase family. Mn(2+) is required as a cofactor.

Its subcellular location is the cytoplasm. It carries out the reaction 2-deoxy-alpha-D-ribose 1-phosphate = 2-deoxy-D-ribose 5-phosphate. The enzyme catalyses alpha-D-ribose 1-phosphate = D-ribose 5-phosphate. Its pathway is carbohydrate degradation; 2-deoxy-D-ribose 1-phosphate degradation; D-glyceraldehyde 3-phosphate and acetaldehyde from 2-deoxy-alpha-D-ribose 1-phosphate: step 1/2. In terms of biological role, isomerase that catalyzes the conversion of deoxy-ribose 1-phosphate (dRib-1-P) and ribose 1-phosphate (Rib-1-P) to deoxy-ribose 5-phosphate (dRib-5-P) and ribose 5-phosphate (Rib-5-P), respectively. The sequence is that of Phosphopentomutase from Alkaliphilus metalliredigens (strain QYMF).